We begin with the raw amino-acid sequence, 309 residues long: Porphobilinogen deaminase (309 aa).

S-(dipyrrolylmethanemethyl)cysteine is present on C243.

Belongs to the HMBS family. As to quaternary structure, monomer. It depends on dipyrromethane as a cofactor.

The catalysed reaction is 4 porphobilinogen + H2O = hydroxymethylbilane + 4 NH4(+). Its pathway is porphyrin-containing compound metabolism; protoporphyrin-IX biosynthesis; coproporphyrinogen-III from 5-aminolevulinate: step 2/4. Its function is as follows. Tetrapolymerization of the monopyrrole PBG into the hydroxymethylbilane pre-uroporphyrinogen in several discrete steps. The chain is Porphobilinogen deaminase (hemC) from Deinococcus radiodurans (strain ATCC 13939 / DSM 20539 / JCM 16871 / CCUG 27074 / LMG 4051 / NBRC 15346 / NCIMB 9279 / VKM B-1422 / R1).